A 128-amino-acid polypeptide reads, in one-letter code: Small ribosomal subunit protein uS11 (128 aa).

The protein belongs to the universal ribosomal protein uS11 family. Part of the 30S ribosomal subunit. Interacts with proteins S7 and S18. Binds to IF-3.

Functionally, located on the platform of the 30S subunit, it bridges several disparate RNA helices of the 16S rRNA. Forms part of the Shine-Dalgarno cleft in the 70S ribosome. The protein is Small ribosomal subunit protein uS11 of Synechococcus sp. (strain JA-2-3B'a(2-13)) (Cyanobacteria bacterium Yellowstone B-Prime).